Here is an 89-residue protein sequence, read N- to C-terminus: MKQKHLQVFGTVQGVGFRYYTQRLANKYNILGTVQNVDDYVEIYAIGNDDDLEQFINAVTEGASPASHVTHYELEDTNVSEDFSDFKSI.

Positions glutamine 3–isoleucine 89 constitute an Acylphosphatase-like domain. Active-site residues include arginine 18 and asparagine 36.

The protein belongs to the acylphosphatase family.

The catalysed reaction is an acyl phosphate + H2O = a carboxylate + phosphate + H(+). The polypeptide is Acylphosphatase (acyP) (Staphylococcus haemolyticus (strain JCSC1435)).